The chain runs to 418 residues: NADH-quinone oxidoreductase subunit D (418 aa).

The protein belongs to the complex I 49 kDa subunit family. NDH-1 is composed of 14 different subunits. Subunits NuoB, C, D, E, F, and G constitute the peripheral sector of the complex.

The protein localises to the cell inner membrane. The enzyme catalyses a quinone + NADH + 5 H(+)(in) = a quinol + NAD(+) + 4 H(+)(out). In terms of biological role, NDH-1 shuttles electrons from NADH, via FMN and iron-sulfur (Fe-S) centers, to quinones in the respiratory chain. The immediate electron acceptor for the enzyme in this species is believed to be ubiquinone. Couples the redox reaction to proton translocation (for every two electrons transferred, four hydrogen ions are translocated across the cytoplasmic membrane), and thus conserves the redox energy in a proton gradient. This Bordetella bronchiseptica (strain ATCC BAA-588 / NCTC 13252 / RB50) (Alcaligenes bronchisepticus) protein is NADH-quinone oxidoreductase subunit D.